Reading from the N-terminus, the 700-residue chain is Auxin response factor 18 (700 aa).

Positions 128–230 form a DNA-binding region, TF-B3; sequence FAKTLTQSDA…DLCVGIRRAK (103 aa). Disordered stretches follow at residues 234–254 and 560–595; these read VGGP…AAGG and VKKS…DNLS. Over residues 239–250 the composition is skewed to pro residues; sequence FLPPPPPPPPTP. Residues 565-594 show a composition bias toward polar residues; the sequence is SDGNAENTVNKSNSDVSSPRSNQNGTTDNL. The PB1 domain maps to 614-697; sequence TGHCKVFMQS…NILTDTSGDN (84 aa).

It belongs to the ARF family. In terms of assembly, homodimers and heterodimers. As to expression, expressed in roots, culms, leaves and young panicles.

It is found in the nucleus. Auxin response factors (ARFs) are transcriptional factors that bind specifically to the DNA sequence 5'-TGTCTC-3' found in the auxin-responsive promoter elements (AuxREs). The polypeptide is Auxin response factor 18 (ARF18) (Oryza sativa subsp. japonica (Rice)).